The following is a 358-amino-acid chain: NADH-quinone oxidoreductase subunit H (358 aa).

8 consecutive transmembrane segments (helical) span residues 20–40 (ITVG…IPLI), 95–115 (ALFY…WAVI), 128–148 (IGLL…IIAG), 168–188 (ISYE…SGSM), 206–226 (VFSW…ISAV), 253–273 (GFAF…ISAL), 290–310 (WGFI…AVLY), and 334–354 (VLIP…ISPL).

Belongs to the complex I subunit 1 family. As to quaternary structure, NDH-1 is composed of 14 different subunits. Subunits NuoA, H, J, K, L, M, N constitute the membrane sector of the complex.

Its subcellular location is the cell inner membrane. It catalyses the reaction a quinone + NADH + 5 H(+)(in) = a quinol + NAD(+) + 4 H(+)(out). Its function is as follows. NDH-1 shuttles electrons from NADH, via FMN and iron-sulfur (Fe-S) centers, to quinones in the respiratory chain. The immediate electron acceptor for the enzyme in this species is believed to be ubiquinone. Couples the redox reaction to proton translocation (for every two electrons transferred, four hydrogen ions are translocated across the cytoplasmic membrane), and thus conserves the redox energy in a proton gradient. This subunit may bind ubiquinone. In Neisseria meningitidis serogroup A / serotype 4A (strain DSM 15465 / Z2491), this protein is NADH-quinone oxidoreductase subunit H.